A 364-amino-acid polypeptide reads, in one-letter code: Methylthioribose-1-phosphate isomerase (364 aa).

Substrate contacts are provided by residues 53-55 (RGA), arginine 90, and glutamine 203. Aspartate 244 functions as the Proton donor in the catalytic mechanism. 254-255 (NK) provides a ligand contact to substrate.

The protein belongs to the eIF-2B alpha/beta/delta subunits family. MtnA subfamily.

The catalysed reaction is 5-(methylsulfanyl)-alpha-D-ribose 1-phosphate = 5-(methylsulfanyl)-D-ribulose 1-phosphate. It functions in the pathway amino-acid biosynthesis; L-methionine biosynthesis via salvage pathway; L-methionine from S-methyl-5-thio-alpha-D-ribose 1-phosphate: step 1/6. In terms of biological role, catalyzes the interconversion of methylthioribose-1-phosphate (MTR-1-P) into methylthioribulose-1-phosphate (MTRu-1-P). The polypeptide is Methylthioribose-1-phosphate isomerase (Sinorhizobium medicae (strain WSM419) (Ensifer medicae)).